The sequence spans 175 residues: MARISSDPLMVGRVIGDVVDNCLQAVKMTVTYNSDKQVYNGHELFPSVVTYKPKVEVHGGDMRSFFTLVMTDPDVPGPSDPYLREHLHWIVTDIPGTTDVSFGKEIIGYEMPRPNIGIHRFVYLLFKQTRRGSVVSVPSYRDQFNTREFAHENDLGLPVAAVFFNCQRETAARRR.

The protein belongs to the phosphatidylethanolamine-binding protein family. Expressed in tissues surrounding vascular bundles in hypocotyl of 2-week-old plants.

The protein localises to the cytoplasm. Functionally, may form complexes with phosphorylated ligands by interfering with kinases and their effectors. Can substitute for TERMINAL FLOWER 1 (in vitro). This Arabidopsis thaliana (Mouse-ear cress) protein is Protein CENTRORADIALIS-like (CEN).